The sequence spans 860 residues: Leucine--tRNA ligase (860 aa).

The 'HIGH' region signature appears at 42-52 (PYPSGRLHMGH). A 'KMSKS' region motif is present at residues 619-623 (KMSKS). An ATP-binding site is contributed by lysine 622.

It belongs to the class-I aminoacyl-tRNA synthetase family.

It localises to the cytoplasm. It catalyses the reaction tRNA(Leu) + L-leucine + ATP = L-leucyl-tRNA(Leu) + AMP + diphosphate. This is Leucine--tRNA ligase from Escherichia coli O17:K52:H18 (strain UMN026 / ExPEC).